The primary structure comprises 521 residues: DEAD-box ATP-dependent RNA helicase 1 (521 aa).

A disordered region spans residues 1–20 (MVVAMATKEEEGGPSSRVPH). The Q motif motif lies at 36 to 65 (CPVAHLPRLDPRLVKPLQRMGIESFFPVQV). Positions 72-302 (IGPGAFERDI…QLELQHPLLL (231 aa)) constitute a Helicase ATP-binding domain. Residue 85–92 (SPTGSGKT) participates in ATP binding. Positions 213–216 (DETD) match the DEAD box motif. A Helicase C-terminal domain is found at 330 to 480 (SLIVLLQELR…SLPEESVETL (151 aa)). Positions 495–507 (LESEATKKSKSGD) are enriched in basic and acidic residues. Residues 495-521 (LESEATKKSKSGDKAPNASKRKRTINT) are disordered.

The protein belongs to the DEAD box helicase family. DDX51/DBP6 subfamily.

It catalyses the reaction ATP + H2O = ADP + phosphate + H(+). This chain is DEAD-box ATP-dependent RNA helicase 1, found in Oryza sativa subsp. japonica (Rice).